The following is a 397-amino-acid chain: Argininosuccinate synthase (397 aa).

8–16 (AYSGGLDTS) is an ATP binding site. Residues Tyr-86 and Ser-91 each contribute to the L-citrulline site. Residue Gly-116 participates in ATP binding. Positions 118, 122, and 123 each coordinate L-aspartate. Residue Asn-122 participates in L-citrulline binding. 5 residues coordinate L-citrulline: Arg-126, Ser-175, Ser-184, Glu-260, and Tyr-272.

Belongs to the argininosuccinate synthase family. Type 1 subfamily. Homotetramer.

Its subcellular location is the cytoplasm. The catalysed reaction is L-citrulline + L-aspartate + ATP = 2-(N(omega)-L-arginino)succinate + AMP + diphosphate + H(+). It functions in the pathway amino-acid biosynthesis; L-arginine biosynthesis; L-arginine from L-ornithine and carbamoyl phosphate: step 2/3. The polypeptide is Argininosuccinate synthase (Clostridium botulinum (strain 657 / Type Ba4)).